The chain runs to 379 residues: UDP-4-amino-4-deoxy-L-arabinose--oxoglutarate aminotransferase (379 aa).

Lys182 is subject to N6-(pyridoxal phosphate)lysine.

It belongs to the DegT/DnrJ/EryC1 family. ArnB subfamily. In terms of assembly, homodimer. Pyridoxal 5'-phosphate serves as cofactor.

The catalysed reaction is UDP-4-amino-4-deoxy-beta-L-arabinose + 2-oxoglutarate = UDP-beta-L-threo-pentopyranos-4-ulose + L-glutamate. The protein operates within nucleotide-sugar biosynthesis; UDP-4-deoxy-4-formamido-beta-L-arabinose biosynthesis; UDP-4-deoxy-4-formamido-beta-L-arabinose from UDP-alpha-D-glucuronate: step 2/3. It participates in bacterial outer membrane biogenesis; lipopolysaccharide biosynthesis. Its function is as follows. Catalyzes the conversion of UDP-4-keto-arabinose (UDP-Ara4O) to UDP-4-amino-4-deoxy-L-arabinose (UDP-L-Ara4N). The modified arabinose is attached to lipid A and is required for resistance to polymyxin and cationic antimicrobial peptides. The polypeptide is UDP-4-amino-4-deoxy-L-arabinose--oxoglutarate aminotransferase (Escherichia coli (strain ATCC 8739 / DSM 1576 / NBRC 3972 / NCIMB 8545 / WDCM 00012 / Crooks)).